The following is a 56-amino-acid chain: Photosystem II reaction center protein K (56 aa).

Residues 1–19 constitute a propeptide that is removed on maturation; it reads MLNFLLQNTFVLWSNFILC. Residues 35–55 traverse the membrane as a helical segment; that stretch reads MPVIPVFFFLLAFVWQAAVSF.

This sequence belongs to the PsbK family. PSII is composed of 1 copy each of membrane proteins PsbA, PsbB, PsbC, PsbD, PsbE, PsbF, PsbH, PsbI, PsbJ, PsbK, PsbL, PsbM, PsbT, PsbX, PsbY, PsbZ, Psb30/Ycf12, at least 3 peripheral proteins of the oxygen-evolving complex and a large number of cofactors. It forms dimeric complexes.

It localises to the plastid. Its subcellular location is the chloroplast thylakoid membrane. Its function is as follows. One of the components of the core complex of photosystem II (PSII). PSII is a light-driven water:plastoquinone oxidoreductase that uses light energy to abstract electrons from H(2)O, generating O(2) and a proton gradient subsequently used for ATP formation. It consists of a core antenna complex that captures photons, and an electron transfer chain that converts photonic excitation into a charge separation. This chain is Photosystem II reaction center protein K, found in Welwitschia mirabilis (Tree tumbo).